The following is a 172-amino-acid chain: C-phycocyanin beta chain (172 aa).

(2R,3E)-phycocyanobilin contacts are provided by residues Asn35, Asp39, Asn72, Arg77, Cys82, 82 to 88 (CLRDMEI), 149 to 151 (TTG), and Cys153. N4-methylasparagine is present on Asn72.

This sequence belongs to the phycobiliprotein family. Heterodimer of an alpha and a beta subunit. Dimers further assemble into trimers and the trimers into hexamers. The basic functional unit of phycobiliproteins is a ring-shaped hexamer formed from two back-to-back trimers contacting via the alpha chain subunits. The trimers are composed of alpha/beta subunit heterodimers arranged around a three-fold axis of symmetry. The phycoerythrins also contain a gamma subunit which is located in the center of the hexamer. Post-translationally, contains two covalently linked phycocyanobilin chromophores.

The protein localises to the plastid. The protein resides in the chloroplast thylakoid membrane. In terms of biological role, light-harvesting photosynthetic tetrapyrrole chromophore-protein from the phycobiliprotein complex (phycobilisome, PBS). Phycocyanin is the major phycobiliprotein in the PBS rod. The protein is C-phycocyanin beta chain (cpcB) of Galdieria sulphuraria (Red alga).